The chain runs to 122 residues: Probable glycine cleavage system H protein (122 aa).

Residues 23–104 (IATVGITDYA…PYGNWLVKMK (82 aa)) form the Lipoyl-binding domain. Lys64 carries the post-translational modification N6-lipoyllysine.

The protein belongs to the GcvH family. The glycine cleavage system is composed of four proteins: P, T, L and H. (R)-lipoate serves as cofactor.

Its function is as follows. The glycine cleavage system catalyzes the degradation of glycine. The H protein shuttles the methylamine group of glycine from the P protein to the T protein. The protein is Probable glycine cleavage system H protein of Thermoplasma volcanium (strain ATCC 51530 / DSM 4299 / JCM 9571 / NBRC 15438 / GSS1).